The primary structure comprises 149 residues: Oligosaccharyltransferase complex subunit OSTC (149 aa).

Topologically, residues 1 to 32 (METLYRVPFLVLECPNLKLKKPPWVHMPSAMT) are cytoplasmic. A helical membrane pass occupies residues 33-53 (VYALVVVSYFLITGGIIYDVI). Over 54-83 (VEPPSVGSMTDEHGHQRPVAFLAYRVNGQY) the chain is Extracellular. A helical transmembrane segment spans residues 84–104 (IMEGLASSFLFTMGGLGFIIL). Over 105–117 (DRSNAPNIPKLNR) the chain is Cytoplasmic. A helical transmembrane segment spans residues 118–138 (FLLLFIGFVCVLLSFFMARVF). Topologically, residues 139-149 (MRMKLPGYLMG) are extracellular.

This sequence belongs to the OSTC family. In terms of assembly, component of STT3A-containing oligosaccharyl transferase (OST-A) complex. STT3A-containing complex assembly occurs through the formation of 3 subcomplexes. Subcomplex 1 contains RPN1 and TMEM258, subcomplex 2 contains the STT3A-specific subunits STT3A, DC2/OSTC, and KCP2 as well as the core subunit OST4, and subcomplex 3 contains RPN2, DAD1, and OST48. The OST-A complex can form stable complexes with the Sec61 complex or with both the Sec61 and TRAP complexes. Interacts with PSEN1 and NCSTN; indicative for an association with the gamma-secretase complex.

It localises to the endoplasmic reticulum. The protein resides in the membrane. It participates in protein modification; protein glycosylation. In terms of biological role, subunit of STT3A-containing oligosaccharyl transferase (OST-A) complex that catalyzes the initial transfer of a defined glycan (Glc(3)Man(9)GlcNAc(2) in eukaryotes) from the lipid carrier dolichol-pyrophosphate to an asparagine residue within an Asn-X-Ser/Thr consensus motif in nascent polypeptide chains, the first step in protein N-glycosylation. N-glycosylation occurs cotranslationally and the complex associates with the Sec61 complex at the channel-forming translocon complex that mediates protein translocation across the endoplasmic reticulum (ER). Within the OST-A complex, acts as an adapter that anchors the OST-A complex to the Sec61 complex. May be involved in N-glycosylation of APP (amyloid-beta precursor protein). Can modulate gamma-secretase cleavage of APP by enhancing endoprotelysis of PSEN1. In Canis lupus familiaris (Dog), this protein is Oligosaccharyltransferase complex subunit OSTC.